Here is a 241-residue protein sequence, read N- to C-terminus: Small ribosomal subunit protein uS10m (241 aa).

A mitochondrion-targeting transit peptide spans 1 to 54 (MIAGVLRRSSLPSRQTLSAALASFNSCISHNLTPATTGASVSSRFTLASSPNSF).

This sequence belongs to the universal ribosomal protein uS10 family. Component of the mitochondrial ribosome small subunit.

The protein resides in the mitochondrion. The chain is Small ribosomal subunit protein uS10m (RPS10) from Arabidopsis thaliana (Mouse-ear cress).